The following is a 291-amino-acid chain: MKSGFVSIIGRTNAGKSTLINSLLEEKIALVSHKQNATRRKIKAIVMHEKNQIIFIDTPGLHESGATLNQLLVQSAIKSMGDCDVILFVASVFDSTKDYENFLSLNPQVPHIIALNKVDLTDNATLLKKLSEYAKFSQHFKAIIPYSSKKKSYKKGLLDEIVKYLDKHEYFYDPEFLSASSEKELYRDFILESIYENLSDELPYSSEVLIHRTKDTPNLLILEANIITDTNSHKGMLIGKEGATLKRIGKDARFKISKLAQKKVLLKLFVTVKKNWQKDEEFLKKLLNDEN.

The Era-type G domain occupies 2-167 (KSGFVSIIGR…LDEIVKYLDK (166 aa)). Residues 10-17 (GRTNAGKS) are G1. 10 to 17 (GRTNAGKS) provides a ligand contact to GTP. Residues 36–40 (NATRR) are G2. Residues 57–60 (DTPG) form a G3 region. GTP is bound by residues 57 to 61 (DTPGL) and 116 to 119 (NKVD). The interval 116-119 (NKVD) is G4. The G5 stretch occupies residues 146–148 (YSS). The KH type-2 domain maps to 186 to 274 (YRDFILESIY…LLKLFVTVKK (89 aa)).

The protein belongs to the TRAFAC class TrmE-Era-EngA-EngB-Septin-like GTPase superfamily. Era GTPase family. Monomer.

The protein localises to the cytoplasm. It localises to the cell inner membrane. Functionally, an essential GTPase that binds both GDP and GTP, with rapid nucleotide exchange. Plays a role in 16S rRNA processing and 30S ribosomal subunit biogenesis and possibly also in cell cycle regulation and energy metabolism. The sequence is that of GTPase Era from Campylobacter jejuni subsp. jejuni serotype O:6 (strain 81116 / NCTC 11828).